The sequence spans 363 residues: Peptide chain release factor 2 (363 aa).

Residue Gln251 is modified to N5-methylglutamine.

The protein belongs to the prokaryotic/mitochondrial release factor family. Post-translationally, methylated by PrmC. Methylation increases the termination efficiency of RF2.

It localises to the cytoplasm. Peptide chain release factor 2 directs the termination of translation in response to the peptide chain termination codons UGA and UAA. In Helicobacter acinonychis (strain Sheeba), this protein is Peptide chain release factor 2.